Reading from the N-terminus, the 235-residue chain is Biosynthetic peptidoglycan transglycosylase (235 aa).

Residues G12–I34 traverse the membrane as a helical segment.

Belongs to the glycosyltransferase 51 family.

The protein resides in the cell inner membrane. It catalyses the reaction [GlcNAc-(1-&gt;4)-Mur2Ac(oyl-L-Ala-gamma-D-Glu-L-Lys-D-Ala-D-Ala)](n)-di-trans,octa-cis-undecaprenyl diphosphate + beta-D-GlcNAc-(1-&gt;4)-Mur2Ac(oyl-L-Ala-gamma-D-Glu-L-Lys-D-Ala-D-Ala)-di-trans,octa-cis-undecaprenyl diphosphate = [GlcNAc-(1-&gt;4)-Mur2Ac(oyl-L-Ala-gamma-D-Glu-L-Lys-D-Ala-D-Ala)](n+1)-di-trans,octa-cis-undecaprenyl diphosphate + di-trans,octa-cis-undecaprenyl diphosphate + H(+). The protein operates within cell wall biogenesis; peptidoglycan biosynthesis. In terms of biological role, peptidoglycan polymerase that catalyzes glycan chain elongation from lipid-linked precursors. This is Biosynthetic peptidoglycan transglycosylase from Aeromonas hydrophila subsp. hydrophila (strain ATCC 7966 / DSM 30187 / BCRC 13018 / CCUG 14551 / JCM 1027 / KCTC 2358 / NCIMB 9240 / NCTC 8049).